The chain runs to 306 residues: Homoserine kinase (306 aa).

ATP is bound at residue 95–105 (PQSRGLGSSAA).

The protein belongs to the GHMP kinase family. Homoserine kinase subfamily.

The protein resides in the cytoplasm. It catalyses the reaction L-homoserine + ATP = O-phospho-L-homoserine + ADP + H(+). It participates in amino-acid biosynthesis; L-threonine biosynthesis; L-threonine from L-aspartate: step 4/5. Catalyzes the ATP-dependent phosphorylation of L-homoserine to L-homoserine phosphate. The sequence is that of Homoserine kinase from Corynebacterium urealyticum (strain ATCC 43042 / DSM 7109).